Consider the following 140-residue polypeptide: uncharacterized protein (140 aa).

Residues Glu121 to Leu140 are disordered.

This is an uncharacterized protein from Schizosaccharomyces pombe (strain 972 / ATCC 24843) (Fission yeast).